The sequence spans 287 residues: Oxaloacetate decarboxylase (287 aa).

Position 50 (Ser50) interacts with substrate. Mg(2+) is bound at residue Asp88. Substrate is bound by residues Arg159 and His235.

It belongs to the isocitrate lyase/PEP mutase superfamily. Oxaloacetate decarboxylase family. As to quaternary structure, homotetramer; dimer of dimers. Mg(2+) serves as cofactor.

The enzyme catalyses oxaloacetate + H(+) = pyruvate + CO2. Catalyzes the decarboxylation of oxaloacetate into pyruvate. Seems to play a role in maintaining cellular concentrations of bicarbonate and pyruvate. In Marinomonas sp. (strain MWYL1), this protein is Oxaloacetate decarboxylase.